Here is a 152-residue protein sequence, read N- to C-terminus: Xanthine-guanine phosphoribosyltransferase (152 aa).

Residues 37 to 38 (RG), Arg-69, and 88 to 96 (DDLVDTGGT) contribute to the 5-phospho-alpha-D-ribose 1-diphosphate site. Arg-69 is a GMP binding site. Asp-89 contacts Mg(2+). Guanine-binding residues include Asp-92 and Ile-135. Residues Asp-92 and Ile-135 each contribute to the xanthine site. Residues 92–96 (DTGGT) and 134–135 (WI) each bind GMP.

Belongs to the purine/pyrimidine phosphoribosyltransferase family. XGPT subfamily. As to quaternary structure, homotetramer. Mg(2+) serves as cofactor.

The protein resides in the cell inner membrane. The enzyme catalyses GMP + diphosphate = guanine + 5-phospho-alpha-D-ribose 1-diphosphate. It catalyses the reaction XMP + diphosphate = xanthine + 5-phospho-alpha-D-ribose 1-diphosphate. The catalysed reaction is IMP + diphosphate = hypoxanthine + 5-phospho-alpha-D-ribose 1-diphosphate. The protein operates within purine metabolism; GMP biosynthesis via salvage pathway; GMP from guanine: step 1/1. It functions in the pathway purine metabolism; XMP biosynthesis via salvage pathway; XMP from xanthine: step 1/1. In terms of biological role, purine salvage pathway enzyme that catalyzes the transfer of the ribosyl-5-phosphate group from 5-phospho-alpha-D-ribose 1-diphosphate (PRPP) to the N9 position of the 6-oxopurines guanine and xanthine to form the corresponding ribonucleotides GMP (guanosine 5'-monophosphate) and XMP (xanthosine 5'-monophosphate), with the release of PPi. To a lesser extent, also acts on hypoxanthine. The protein is Xanthine-guanine phosphoribosyltransferase of Erwinia tasmaniensis (strain DSM 17950 / CFBP 7177 / CIP 109463 / NCPPB 4357 / Et1/99).